A 546-amino-acid polypeptide reads, in one-letter code: Carboxypeptidase Y homolog A (546 aa).

A signal peptide spans 1-17 (MKLLASTVLVGAAAASI). The propeptide occupies 18–132 (TPQQQVLQNP…KLEQYNLRAK (115 aa)). 5 disulfide bridges follow: Cys186-Cys426, Cys320-Cys334, Cys344-Cys367, Cys351-Cys360, and Cys389-Cys396. N-linked (GlcNAc...) asparagine glycosylation occurs at Asn217. Ser273 is an active-site residue. Residue Asp465 is part of the active site. Asn512 is a glycosylation site (N-linked (GlcNAc...) asparagine). His523 is a catalytic residue.

It belongs to the peptidase S10 family.

It localises to the vacuole. The enzyme catalyses Release of a C-terminal amino acid with broad specificity.. Functionally, vacuolar carboxypeptidase involved in degradation of small peptides. Digests preferentially peptides containing an aliphatic or hydrophobic residue in P1' position, as well as methionine, leucine or phenylalanine in P1 position of ester substrate. This is Carboxypeptidase Y homolog A (CPYA) from Botryotinia fuckeliana (strain B05.10) (Noble rot fungus).